Here is a 305-residue protein sequence, read N- to C-terminus: Sulfate adenylyltransferase subunit 2 (305 aa).

Belongs to the PAPS reductase family. CysD subfamily. In terms of assembly, heterodimer composed of CysD, the smaller subunit, and CysN.

It carries out the reaction sulfate + ATP + H(+) = adenosine 5'-phosphosulfate + diphosphate. Its pathway is sulfur metabolism; hydrogen sulfide biosynthesis; sulfite from sulfate: step 1/3. In terms of biological role, with CysN forms the ATP sulfurylase (ATPS) that catalyzes the adenylation of sulfate producing adenosine 5'-phosphosulfate (APS) and diphosphate, the first enzymatic step in sulfur assimilation pathway. APS synthesis involves the formation of a high-energy phosphoric-sulfuric acid anhydride bond driven by GTP hydrolysis by CysN coupled to ATP hydrolysis by CysD. This chain is Sulfate adenylyltransferase subunit 2, found in Pseudomonas fluorescens (strain Pf0-1).